We begin with the raw amino-acid sequence, 239 residues long: Ribonuclease PH (239 aa).

Phosphate contacts are provided by residues Arg86 and 124–126; that span reads GTR.

It belongs to the RNase PH family. In terms of assembly, homohexameric ring arranged as a trimer of dimers.

It catalyses the reaction tRNA(n+1) + phosphate = tRNA(n) + a ribonucleoside 5'-diphosphate. Functionally, phosphorolytic 3'-5' exoribonuclease that plays an important role in tRNA 3'-end maturation. Removes nucleotide residues following the 3'-CCA terminus of tRNAs; can also add nucleotides to the ends of RNA molecules by using nucleoside diphosphates as substrates, but this may not be physiologically important. Probably plays a role in initiation of 16S rRNA degradation (leading to ribosome degradation) during starvation. The sequence is that of Ribonuclease PH from Rhodopseudomonas palustris (strain BisB18).